The following is a 300-amino-acid chain: uncharacterized protein (300 aa).

The stretch at 67–179 (LAFEELEKEK…IAKANELKDS (113 aa)) forms a coiled coil. The segment covering 203-285 (STTASLSQSE…PSSQSTYQQQ (83 aa)) has biased composition (low complexity). Positions 203–300 (STTASLSQSE…KGFFARLFNL (98 aa)) are disordered.

This is an uncharacterized protein from Staphylococcus epidermidis (strain ATCC 12228 / FDA PCI 1200).